The chain runs to 350 residues: Protein-glutamate methylesterase/protein-glutamine glutaminase 1 (350 aa).

The region spanning 1–116 (MVVDDSAVVR…KGFLHDSAKV (116 aa)) is the Response regulatory domain. Asp50 carries the post-translational modification 4-aspartylphosphate. The region spanning 160–350 (LKTTEQLVAI…IPQAILDCSH (191 aa)) is the CheB-type methylesterase domain. Active-site residues include Ser172, His198, and Asp294.

The protein belongs to the CheB family. In terms of processing, phosphorylated by CheA. Phosphorylation of the N-terminal regulatory domain activates the methylesterase activity.

Its subcellular location is the cytoplasm. It catalyses the reaction [protein]-L-glutamate 5-O-methyl ester + H2O = L-glutamyl-[protein] + methanol + H(+). The catalysed reaction is L-glutaminyl-[protein] + H2O = L-glutamyl-[protein] + NH4(+). Its function is as follows. Involved in chemotaxis. Part of a chemotaxis signal transduction system that modulates chemotaxis in response to various stimuli. Catalyzes the demethylation of specific methylglutamate residues introduced into the chemoreceptors (methyl-accepting chemotaxis proteins or MCP) by CheR. Also mediates the irreversible deamidation of specific glutamine residues to glutamic acid. The polypeptide is Protein-glutamate methylesterase/protein-glutamine glutaminase 1 (Photobacterium profundum (strain SS9)).